A 388-amino-acid chain; its full sequence is Cuticle-degrading protease (388 aa).

Positions 1–18 are cleaved as a signal peptide; that stretch reads MHLSALLTLLPAVLAAPA. Positions 19–107 are excised as a propeptide; that stretch reads TIGRRAEPAP…IEKDAVMRIS (89 aa). The region spanning 41-106 is the Inhibitor I9 domain; sequence KYIVKFKDDI…FIEKDAVMRI (66 aa). The Peptidase S8 domain occupies 116-388; it reads PWGLGRISHR…TVNYLAYNGA (273 aa). Disulfide bonds link C143/C233 and C288/C360. Active-site charge relay system residues include D148 and H179. N-linked (GlcNAc...) asparagine glycosylation occurs at N296. S334 (charge relay system) is an active-site residue.

The protein belongs to the peptidase S8 family.

The protein localises to the secreted. In terms of biological role, capable of breaching the insect cuticle. The polypeptide is Cuticle-degrading protease (PR1) (Metarhizium anisopliae (Entomophthora anisopliae)).